We begin with the raw amino-acid sequence, 321 residues long: Methionyl-tRNA formyltransferase (321 aa).

Gly-111 to Pro-114 is a binding site for (6S)-5,6,7,8-tetrahydrofolate.

This sequence belongs to the Fmt family.

It carries out the reaction L-methionyl-tRNA(fMet) + (6R)-10-formyltetrahydrofolate = N-formyl-L-methionyl-tRNA(fMet) + (6S)-5,6,7,8-tetrahydrofolate + H(+). Its function is as follows. Attaches a formyl group to the free amino group of methionyl-tRNA(fMet). The formyl group appears to play a dual role in the initiator identity of N-formylmethionyl-tRNA by promoting its recognition by IF2 and preventing the misappropriation of this tRNA by the elongation apparatus. This Chlamydia pneumoniae (Chlamydophila pneumoniae) protein is Methionyl-tRNA formyltransferase.